The sequence spans 239 residues: 1-(5-phosphoribosyl)-5-[(5-phosphoribosylamino)methylideneamino] imidazole-4-carboxamide isomerase (239 aa).

Catalysis depends on Asp8, which acts as the Proton acceptor. Asp129 functions as the Proton donor in the catalytic mechanism.

This sequence belongs to the HisA/HisF family.

The protein localises to the cytoplasm. It catalyses the reaction 1-(5-phospho-beta-D-ribosyl)-5-[(5-phospho-beta-D-ribosylamino)methylideneamino]imidazole-4-carboxamide = 5-[(5-phospho-1-deoxy-D-ribulos-1-ylimino)methylamino]-1-(5-phospho-beta-D-ribosyl)imidazole-4-carboxamide. The protein operates within amino-acid biosynthesis; L-histidine biosynthesis; L-histidine from 5-phospho-alpha-D-ribose 1-diphosphate: step 4/9. The sequence is that of 1-(5-phosphoribosyl)-5-[(5-phosphoribosylamino)methylideneamino] imidazole-4-carboxamide isomerase from Bacillus cytotoxicus (strain DSM 22905 / CIP 110041 / 391-98 / NVH 391-98).